We begin with the raw amino-acid sequence, 644 residues long: 2-isopropylmalate synthase (644 aa).

The segment at 1–40 (MTTSESPDAYTESFGAHTIVKPAGPPRVGQPSWNPQRASS) is disordered. Over residues 31–40 (PSWNPQRASS) the composition is skewed to polar residues. The Pyruvate carboxyltransferase domain maps to 72–346 (PLWCAVDLRD…DPQIDFSNID (275 aa)). Asp81, His285, His287, and Asn321 together coordinate Mg(2+). The regulatory domain stretch occupies residues 491–644 (PVRPLERIRQ…VVSAVNRAAR (154 aa)). One copy of the VNTR1 repeat lies at 575–593 (VTIASPAQPGEAGRHASDP). The segment at 581–612 (AQPGEAGRHASDPVTIASPAQPGEAGRHASDP) is disordered. One copy of the VNTR2 repeat lies at 594–612 (VTIASPAQPGEAGRHASDP).

The protein belongs to the alpha-IPM synthase/homocitrate synthase family. LeuA type 2 subfamily. Homodimer. It depends on Mg(2+) as a cofactor.

Its subcellular location is the cytoplasm. The catalysed reaction is 3-methyl-2-oxobutanoate + acetyl-CoA + H2O = (2S)-2-isopropylmalate + CoA + H(+). Its pathway is amino-acid biosynthesis; L-leucine biosynthesis; L-leucine from 3-methyl-2-oxobutanoate: step 1/4. Its function is as follows. Catalyzes the condensation of the acetyl group of acetyl-CoA with 3-methyl-2-oxobutanoate (2-ketoisovalerate) to form 3-carboxy-3-hydroxy-4-methylpentanoate (2-isopropylmalate). The chain is 2-isopropylmalate synthase from Mycobacterium tuberculosis (strain CDC 1551 / Oshkosh).